Here is a 410-residue protein sequence, read N- to C-terminus: Na(+)-translocating NADH-quinone reductase subunit B (410 aa).

3 consecutive transmembrane segments (helical) span residues 56–76 (MMIL…YNVG), 119–139 (LFGA…GGFW), and 159–179 (SILF…ALGI). Threonine 232 is modified (FMN phosphoryl threonine). 5 consecutive transmembrane segments (helical) span residues 266-286 (GSIG…IVFA), 293-313 (IIAG…FIGS), 318-338 (MFAM…GMLF), 347-367 (SFTN…CVLI), and 377-397 (GMML…YFVA).

Belongs to the NqrB/RnfD family. Composed of six subunits; NqrA, NqrB, NqrC, NqrD, NqrE and NqrF. FMN serves as cofactor.

It localises to the cell inner membrane. The enzyme catalyses a ubiquinone + n Na(+)(in) + NADH + H(+) = a ubiquinol + n Na(+)(out) + NAD(+). NQR complex catalyzes the reduction of ubiquinone-1 to ubiquinol by two successive reactions, coupled with the transport of Na(+) ions from the cytoplasm to the periplasm. NqrA to NqrE are probably involved in the second step, the conversion of ubisemiquinone to ubiquinol. This chain is Na(+)-translocating NADH-quinone reductase subunit B, found in Neisseria meningitidis serogroup B (strain ATCC BAA-335 / MC58).